The following is a 313-amino-acid chain: Vacuolar membrane protein ZYRO0A01628g (313 aa).

Low complexity predominate over residues Ser-22 to Ala-37. The interval Ser-22–Pro-48 is disordered. A helical transmembrane segment spans residues Gly-59 to Trp-79. Low complexity predominate over residues Thr-221–Leu-234. Residues Thr-221–Thr-313 are disordered. The segment covering Asp-235 to Pro-247 has biased composition (basic and acidic residues). A compositionally biased stretch (basic residues) spans Lys-248–Asn-257. The span at Asn-285–Leu-301 shows a compositional bias: polar residues.

Belongs to the PRM5 family.

The protein resides in the vacuole membrane. The chain is Vacuolar membrane protein ZYRO0A01628g from Zygosaccharomyces rouxii (strain ATCC 2623 / CBS 732 / NBRC 1130 / NCYC 568 / NRRL Y-229).